Consider the following 265-residue polypeptide: MEFLKRSFAPLTEKQWQEIDNRAREIFKTQLYGRKFVDVEGPYGWEYAAHPLGEVEVLSDENEVVKWGLRKSLPLIELRATFTLDLWELDNLERGKPNVDLSSLEETVRKVAEFEDEVIFRGCEKSGVKGLLSFEERKIECGSTPKDLLEAIVRALSIFSKDGIEGPYTLVINTDRWINFLKEEAGHYPLEKRVEECLRGGKIITTPRIEDALVVSERGGDFKLILGQDLSIGYEDREKDAVRLFITETFTFQVVNPEALILLKF.

FMN contacts are provided by residues 79-81, tryptophan 87, and 90-94; these read RAT and DNLER. A pore-forming loop region spans residues 184–189; the sequence is EAGHYP. Glutamate 235 serves as a coordination point for FMN.

It belongs to the encapsulin family. Family 1 subfamily. In terms of assembly, homomultimeric. This encapsulin nanocompartment is formed by 60 subunits; monomers form 12 pentamers which assemble to form shells. There are 12 pores where the pentamers meet as well as 3-fold axis channels and dimer channels; none are larger than 3-4 Angstroms in diameter. The N-terminus of the protein is inside the shell, the C-terminus is outside. Probably 3, 4 or 5 Flp cargo decamers bind inside the encapulin nanocompartment. The cofactor is FMN.

The protein localises to the encapsulin nanocompartment. Its activity is regulated as follows. Proteolysis activated by calcium and cobalt. Functionally, shell component of a type 1 encapsulin nanocompartment. Assembles into proteinaceous shells 23-24 nm in diameter with 2-2.5 nm thick walls. Cargo protein Flp (ferritin-like protein, probably stores iron) is targeted to the interior via its C-terminal extension; empty intact shells can be isolated in the absence of cargo protein. Fe(2+) may be able to pass though the 5-fold and dimer channels in the protein shell. Its function is as follows. Protease that exhibits activity toward chymotrypsin and trypsin substrates. Probably does not have antibacterial activity. This is Type 1 encapsulin shell protein from Thermotoga maritima (strain ATCC 43589 / DSM 3109 / JCM 10099 / NBRC 100826 / MSB8).